A 407-amino-acid chain; its full sequence is Putative cystathionine beta-lyase (407 aa).

N6-(pyridoxal phosphate)lysine is present on lysine 237.

It belongs to the class-II pyridoxal-phosphate-dependent aminotransferase family. MalY/PatB cystathionine beta-lyase subfamily. Pyridoxal 5'-phosphate is required as a cofactor.

The catalysed reaction is L,L-cystathionine + H2O = L-homocysteine + pyruvate + NH4(+). It catalyses the reaction an S-substituted L-cysteine + H2O = a thiol + pyruvate + NH4(+). The protein operates within amino-acid biosynthesis; L-methionine biosynthesis via de novo pathway; L-homocysteine from L-cystathionine: step 1/1. This Mycobacterium tuberculosis (strain CDC 1551 / Oshkosh) protein is Putative cystathionine beta-lyase.